We begin with the raw amino-acid sequence, 82 residues long: Small ribosomal subunit protein bS16 (82 aa).

The protein belongs to the bacterial ribosomal protein bS16 family.

The chain is Small ribosomal subunit protein bS16 from Yersinia pseudotuberculosis serotype O:1b (strain IP 31758).